The chain runs to 190 residues: Protein GrpE (190 aa).

The segment at 1–40 (MAKEKKEEVKEEEVSEATSTEGSTDVESTNNDDLTTETQA) is disordered. The span at 22–40 (GSTDVESTNNDDLTTETQA) shows a compositional bias: polar residues.

It belongs to the GrpE family. As to quaternary structure, homodimer.

It is found in the cytoplasm. Its function is as follows. Participates actively in the response to hyperosmotic and heat shock by preventing the aggregation of stress-denatured proteins, in association with DnaK and GrpE. It is the nucleotide exchange factor for DnaK and may function as a thermosensor. Unfolded proteins bind initially to DnaJ; upon interaction with the DnaJ-bound protein, DnaK hydrolyzes its bound ATP, resulting in the formation of a stable complex. GrpE releases ADP from DnaK; ATP binding to DnaK triggers the release of the substrate protein, thus completing the reaction cycle. Several rounds of ATP-dependent interactions between DnaJ, DnaK and GrpE are required for fully efficient folding. The protein is Protein GrpE of Pediococcus pentosaceus (strain ATCC 25745 / CCUG 21536 / LMG 10740 / 183-1w).